We begin with the raw amino-acid sequence, 293 residues long: ATP phosphoribosyltransferase (293 aa).

Belongs to the ATP phosphoribosyltransferase family. Long subfamily. The cofactor is Mg(2+).

Its subcellular location is the cytoplasm. The catalysed reaction is 1-(5-phospho-beta-D-ribosyl)-ATP + diphosphate = 5-phospho-alpha-D-ribose 1-diphosphate + ATP. It functions in the pathway amino-acid biosynthesis; L-histidine biosynthesis; L-histidine from 5-phospho-alpha-D-ribose 1-diphosphate: step 1/9. Its activity is regulated as follows. Feedback inhibited by histidine. Functionally, catalyzes the condensation of ATP and 5-phosphoribose 1-diphosphate to form N'-(5'-phosphoribosyl)-ATP (PR-ATP). Has a crucial role in the pathway because the rate of histidine biosynthesis seems to be controlled primarily by regulation of HisG enzymatic activity. This chain is ATP phosphoribosyltransferase, found in Nitratidesulfovibrio vulgaris (strain DP4) (Desulfovibrio vulgaris).